Here is a 318-residue protein sequence, read N- to C-terminus: Mitochondrial coenzyme A transporter SLC25A42 (318 aa).

3 Solcar repeats span residues arginine 31–isoleucine 117, leucine 129–leucine 214, and proline 224–leucine 312. 6 consecutive transmembrane segments (helical) span residues valine 33–proline 53, leucine 89–serine 109, leucine 135–valine 155, leucine 186–phenylalanine 206, methionine 230–valine 250, and valine 293–leucine 313.

This sequence belongs to the mitochondrial carrier (TC 2.A.29) family.

It is found in the mitochondrion inner membrane. It carries out the reaction ADP(out) + CoA(in) = ADP(in) + CoA(out). It catalyses the reaction 3'-dephospho-CoA(in) + ADP(out) = 3'-dephospho-CoA(out) + ADP(in). The enzyme catalyses adenosine 3',5'-bisphosphate(in) + ADP(out) = adenosine 3',5'-bisphosphate(out) + ADP(in). The catalysed reaction is AMP(in) + ADP(out) = AMP(out) + ADP(in). It carries out the reaction dADP(in) + ADP(out) = dADP(out) + ADP(in). It catalyses the reaction ADP(in) + ATP(out) = ADP(out) + ATP(in). Functionally, mitochondrial carrier mediating the transport of coenzyme A (CoA) in mitochondria in exchange for intramitochondrial (deoxy)adenine nucleotides and adenosine 3',5'-diphosphate. This Homo sapiens (Human) protein is Mitochondrial coenzyme A transporter SLC25A42 (SLC25A42).